The sequence spans 512 residues: MKKTTLLVILDGWGYSDSDYFNAIKNANTPTWDSIWQEFPKTLINASSLEVGLPRGQMGNSEVGHVNIGCGRVVYQELTKIDKAIEEKTFGDNKAIGAAIDNVIKNDSNLHLIGLLSPGGVHSHEEHIFEMIKIAKQKGIKRLYLHAFLDGRDTPPRSAEKSIKKADKLLQDLNLGYIASVCGRYYAMDRDNRWDRVEKAYNAIVNANADFIYDSALEALEQSYARDQSDEFVIPTCIKKDGHLVKVQDNDSVIFMNFRADRAREISHAFTDESFDHFPRKKHLNINFTTLTEYDSKLKCAVAFPPEQPINTLGEVLMKNHKTQLRIAETEKYPHVTFFFNGGREEQFEGEDRILIPSPKVATYDLQPEMSAPEVTDKLVAAINSGKYDCIVCNYANSDMVGHTGNYEAAMQAIEYLDKCIARLKDAILEHDGNMFITADHGNADMMVNPETQKPHTAHTTNLVPFVYVGHKKAQVALEHGKLSDIAPTLLNVMGIAQPKEMTGKTIFNFEK.

2 residues coordinate Mn(2+): aspartate 11 and serine 61. Serine 61 functions as the Phosphoserine intermediate in the catalytic mechanism. Residues histidine 122, 152-153 (RD), arginine 184, arginine 190, 259-262 (RADR), and lysine 332 each bind substrate. Mn(2+)-binding residues include aspartate 399, histidine 403, aspartate 440, histidine 441, and histidine 459.

It belongs to the BPG-independent phosphoglycerate mutase family. As to quaternary structure, monomer. Requires Mn(2+) as cofactor.

It carries out the reaction (2R)-2-phosphoglycerate = (2R)-3-phosphoglycerate. Its pathway is carbohydrate degradation; glycolysis; pyruvate from D-glyceraldehyde 3-phosphate: step 3/5. Functionally, catalyzes the interconversion of 2-phosphoglycerate and 3-phosphoglycerate. In Francisella tularensis subsp. novicida (strain U112), this protein is 2,3-bisphosphoglycerate-independent phosphoglycerate mutase.